The primary structure comprises 280 residues: Chlorophyll a-b binding protein CP29 (280 aa).

Residues 1-42 (MVFKFPTPPGTQKKAGTTATKPAPKATTKKVATSTGTRSGGV) are disordered. Residue Val-2 is modified to N-acetylvaline. Thr-7 carries the phosphothreonine; in State 1 and State 2 modification. The segment covering 10-37 (GTQKKAGTTATKPAPKATTKKVATSTGT) has biased composition (low complexity). Thr-17 carries the post-translational modification Phosphothreonine; in State 2. Thr-33 is subject to Phosphothreonine; in State 1 and State 2. Tyr-47 provides a ligand contact to chlorophyll b. Phe-73 and Ser-79 together coordinate chlorophyll a. Ser-103 is modified (phosphoserine; in State 2). Chlorophyll a contacts are provided by Glu-137 and His-140. 2 helical membrane passes run 143–163 (WAML…VSWV) and 176–196 (AGLS…ILVG). Residues Ser-183, Glu-199, and Arg-202 each contribute to the chlorophyll b site. 4 residues coordinate chlorophyll a: Glu-238, His-241, Arg-243, and Gln-255. A helical membrane pass occupies residues 244–264 (LAMVSFFGYGVQALSTGEGAL).

It belongs to the light-harvesting chlorophyll a/b-binding (LHC) protein family. As to quaternary structure, the LHC complex consists of chlorophyll a-b binding proteins. The cofactor is Binds at least 14 chlorophylls (8 Chl-a and 6 Chl-b) and carotenoids such as lutein and neoxanthin.. Post-translationally, reversible phosphorylation plays a role in the State transition process and determines the affinity of LHCII for PSI and PSII.

It is found in the plastid. The protein localises to the chloroplast thylakoid membrane. In terms of biological role, the light-harvesting complex (LHC) functions as a light receptor, it captures and delivers excitation energy to photosystems with which it is closely associated. CP29 facilitates the State 1 to State 2 transition, where State I is induced by excess photosystem I (PSI) light and State 2 is induced by excess photosystem II (PSII) light. The polypeptide is Chlorophyll a-b binding protein CP29 (Chlamydomonas reinhardtii (Chlamydomonas smithii)).